The sequence spans 232 residues: Large ribosomal subunit protein uL1 (232 aa).

Belongs to the universal ribosomal protein uL1 family. In terms of assembly, part of the 50S ribosomal subunit.

Binds directly to 23S rRNA. The L1 stalk is quite mobile in the ribosome, and is involved in E site tRNA release. Its function is as follows. Protein L1 is also a translational repressor protein, it controls the translation of the L11 operon by binding to its mRNA. This Cutibacterium acnes (strain DSM 16379 / KPA171202) (Propionibacterium acnes) protein is Large ribosomal subunit protein uL1.